Here is a 153-residue protein sequence, read N- to C-terminus: Sec-independent protein translocase protein TatB (153 aa).

Residues 1–21 (MFGISFSELLLVGLVALLVLG) form a helical membrane-spanning segment. Residues 78–153 (MFAQNQHPET…HDSSLPPRAP (76 aa)) are disordered.

The protein belongs to the TatB family. The Tat system comprises two distinct complexes: a TatABC complex, containing multiple copies of TatA, TatB and TatC subunits, and a separate TatA complex, containing only TatA subunits. Substrates initially bind to the TatABC complex, which probably triggers association of the separate TatA complex to form the active translocon.

The protein localises to the cell inner membrane. Part of the twin-arginine translocation (Tat) system that transports large folded proteins containing a characteristic twin-arginine motif in their signal peptide across membranes. Together with TatC, TatB is part of a receptor directly interacting with Tat signal peptides. TatB may form an oligomeric binding site that transiently accommodates folded Tat precursor proteins before their translocation. In Pseudomonas savastanoi pv. phaseolicola (strain 1448A / Race 6) (Pseudomonas syringae pv. phaseolicola (strain 1448A / Race 6)), this protein is Sec-independent protein translocase protein TatB.